Here is a 684-residue protein sequence, read N- to C-terminus: Probable phosphoenolpyruvate synthase (684 aa).

His-424 serves as the catalytic Tele-phosphohistidine intermediate. Substrate-binding residues include Arg-517, Arg-564, and Glu-661. A Mg(2+)-binding site is contributed by Glu-661.

It belongs to the PEP-utilizing enzyme family. Mg(2+) serves as cofactor.

It catalyses the reaction pyruvate + ATP + H2O = phosphoenolpyruvate + AMP + phosphate + 2 H(+). Its pathway is carbohydrate biosynthesis; gluconeogenesis. Functionally, catalyzes the phosphorylation of pyruvate to phosphoenolpyruvate. The chain is Probable phosphoenolpyruvate synthase (ppsA) from Methanothermobacter thermautotrophicus (strain ATCC 29096 / DSM 1053 / JCM 10044 / NBRC 100330 / Delta H) (Methanobacterium thermoautotrophicum).